We begin with the raw amino-acid sequence, 98 residues long: uncharacterized protein (98 aa).

The span at methionine 1–proline 21 shows a compositional bias: low complexity. The segment at methionine 1–aspartate 26 is disordered. Residues methionine 29–cysteine 49 form a helical membrane-spanning segment.

It is found in the host membrane. This is an uncharacterized protein from Equine herpesvirus 2 (strain 86/87) (EHV-2).